Consider the following 388-residue polypeptide: Deoxyguanosinetriphosphate triphosphohydrolase-like protein (388 aa).

Residues 24 to 44 (HSAQTRGRVHAEPPSTSRTEF) form a disordered region. An HD domain is found at 78–209 (RLTHSLEVAQ…ANLADEVAYN (132 aa)).

This sequence belongs to the dGTPase family. Type 2 subfamily.

The protein is Deoxyguanosinetriphosphate triphosphohydrolase-like protein of Ralstonia pickettii (strain 12J).